A 185-amino-acid chain; its full sequence is MLEQAPAEVKQVIESGGVVAYPTEAVYGLGCDPDNDAAITKLLAIKKRPWEKGLILVASDYQQLLPYIDDSQLTEEQRERVFSKWPGPFTFIMPIKPGISNLLCGSFNSLAVRVSDHPTIQAICQQLGKPLVSTSANHSGEEPAMSHEEILAKFEGEIDALVAGSLGEQRKPSTIIDAISGKILR.

The 183-residue stretch at Glu-3–Arg-185 folds into the YrdC-like domain.

It belongs to the SUA5 family. TsaC subfamily.

It is found in the cytoplasm. The catalysed reaction is L-threonine + hydrogencarbonate + ATP = L-threonylcarbamoyladenylate + diphosphate + H2O. Functionally, required for the formation of a threonylcarbamoyl group on adenosine at position 37 (t(6)A37) in tRNAs that read codons beginning with adenine. Catalyzes the conversion of L-threonine, HCO(3)(-)/CO(2) and ATP to give threonylcarbamoyl-AMP (TC-AMP) as the acyladenylate intermediate, with the release of diphosphate. The chain is Threonylcarbamoyl-AMP synthase from Shewanella woodyi (strain ATCC 51908 / MS32).